A 200-amino-acid chain; its full sequence is Claudin-11 (200 aa).

Position 1 (M1) is a topological domain, cytoplasmic. Residues 2-22 (VATCLQVVGFVTSFVGWIGVI) traverse the membrane as a helical segment. The Extracellular portion of the chain corresponds to 23–75 (VTTSTNDWVVTCGYTIPTCRKLDELGSKGLWADCVMATGLYHCKPLVDILPCR). A helical transmembrane segment spans residues 76-96 (ALMIAASVLGLPAILLLLTVL). Residues 97-115 (PCIRMGQEPGVAKYRRAQL) are Cytoplasmic-facing. The chain crosses the membrane as a helical span at residues 116–136 (AGVLLILLALCAIVATIWFPV). The Extracellular segment spans residues 137-150 (CAHRETTIVSFGYS). A helical transmembrane segment spans residues 151 to 171 (LYAGWIGAVLCLVGGCVILCC). Over 172-200 (AGDAQAFGENRFYYTAGSSSPTHAKSAHV) the chain is Cytoplasmic. Residues S190 and S191 each carry the phosphoserine modification.

It belongs to the claudin family. In terms of assembly, interacts with tetraspanin-3/TSPAN3. Interacts with OCLN.

The protein resides in the cell junction. The protein localises to the tight junction. It localises to the cell membrane. Functionally, plays a major role in tight junction-specific obliteration of the intercellular space, through calcium-independent cell-adhesion activity. In Pongo abelii (Sumatran orangutan), this protein is Claudin-11 (CLDN11).